The following is a 298-amino-acid chain: 3-hydroxyisobutyrate dehydrogenase (298 aa).

NAD(+) is bound by residues 2 to 30 (TDIA…VNVF), 65 to 66 (LP), and Thr-96. Lys-171 is an active-site residue. Lys-246 is an NAD(+) binding site.

Belongs to the HIBADH-related family.

The catalysed reaction is 3-hydroxy-2-methylpropanoate + NAD(+) = 2-methyl-3-oxopropanoate + NADH + H(+). Its pathway is amino-acid degradation; L-valine degradation. The protein is 3-hydroxyisobutyrate dehydrogenase of Pseudomonas aeruginosa (strain ATCC 15692 / DSM 22644 / CIP 104116 / JCM 14847 / LMG 12228 / 1C / PRS 101 / PAO1).